A 513-amino-acid polypeptide reads, in one-letter code: OTU domain-containing protein 5-A (513 aa).

2 disordered regions span residues 1 to 75 (MTIL…GGAG) and 99 to 136 (GPGH…DEYE). Residues 166 to 289 (FIIKQMKEDG…NIHYNSVVNP (124 aa)) enclose the OTU domain. The cys-loop stretch occupies residues 171–177 (MKEDGAC). The active site involves aspartate 174. Cysteine 177 functions as the Nucleophile in the catalytic mechanism. Residues 226-236 (KRKNNCHGNHI) form a variable-loop region. Positions 277-282 (YHRNIH) are his-loop. The active site involves histidine 282. The tract at residues 387-446 (LEEWSGRSPRQRSTAGSPEHPDLHAELCMKPPSPGAPLILGKPPSPCAPGPSNQMSTGAD) is disordered.

It belongs to the peptidase C85 family.

It catalyses the reaction Thiol-dependent hydrolysis of ester, thioester, amide, peptide and isopeptide bonds formed by the C-terminal Gly of ubiquitin (a 76-residue protein attached to proteins as an intracellular targeting signal).. Functionally, deubiquitinating enzyme that may function as negative regulator of the innate immune system. Has peptidase activity towards 'Lys-48'- and 'Lys-63'-linked polyubiquitin chains. Can also cleave 'Lys-11'-linked ubiquitin chains (in vitro). The protein is OTU domain-containing protein 5-A (otud5-a) of Xenopus laevis (African clawed frog).